A 442-amino-acid chain; its full sequence is UDP-N-acetylmuramate--L-alanine ligase (442 aa).

Residue 110-116 participates in ATP binding; sequence GAHGKTS.

Belongs to the MurCDEF family.

The protein localises to the cytoplasm. The enzyme catalyses UDP-N-acetyl-alpha-D-muramate + L-alanine + ATP = UDP-N-acetyl-alpha-D-muramoyl-L-alanine + ADP + phosphate + H(+). Its pathway is cell wall biogenesis; peptidoglycan biosynthesis. In terms of biological role, cell wall formation. The protein is UDP-N-acetylmuramate--L-alanine ligase of Streptococcus thermophilus (strain ATCC BAA-491 / LMD-9).